Reading from the N-terminus, the 178-residue chain is Cell wall-binding protein YwsB (178 aa).

A signal peptide spans 1-30 (MNKPTKLFSTLALAAGMTAAAAGGAGTIHA). 2 SH3b domains span residues 47 to 111 (IDSY…VKAA) and 116 to 178 (TKTK…HMTK).

The protein localises to the secreted. Its subcellular location is the cell wall. With respect to regulation, increases in stationary phase in a strain lacking the WprA protease. In Bacillus subtilis (strain 168), this protein is Cell wall-binding protein YwsB (ywsB).